The following is a 453-amino-acid chain: Bifunctional protein GlmU (453 aa).

A pyrophosphorylase region spans residues 1–227; the sequence is MAVSVIILAA…SIEVMGVNDR (227 aa). UDP-N-acetyl-alpha-D-glucosamine contacts are provided by residues 8–11, Lys22, Gln73, 78–79, 100–102, Gly137, Glu152, Asn167, and Asn225; these read LAAG, GT, and SGD. Mg(2+) is bound at residue Asp102. A Mg(2+)-binding site is contributed by Asn225. Residues 228-248 are linker; sequence QQLAYLERFYQKREAARLMGE. Positions 249 to 453 are N-acetyltransferase; the sequence is GVSLSDPDRF…WPGWKRPSKK (205 aa). Arg331 and Lys349 together coordinate UDP-N-acetyl-alpha-D-glucosamine. Catalysis depends on His361, which acts as the Proton acceptor. Positions 364 and 375 each coordinate UDP-N-acetyl-alpha-D-glucosamine. Acetyl-CoA-binding positions include Ala378, 384 to 385, Ser403, Ala421, and Arg438; that span reads NY. The disordered stretch occupies residues 430-453; it reads PPGELTLSRTPQKSWPGWKRPSKK.

In the N-terminal section; belongs to the N-acetylglucosamine-1-phosphate uridyltransferase family. The protein in the C-terminal section; belongs to the transferase hexapeptide repeat family. Homotrimer. Mg(2+) serves as cofactor.

It is found in the cytoplasm. The catalysed reaction is alpha-D-glucosamine 1-phosphate + acetyl-CoA = N-acetyl-alpha-D-glucosamine 1-phosphate + CoA + H(+). It carries out the reaction N-acetyl-alpha-D-glucosamine 1-phosphate + UTP + H(+) = UDP-N-acetyl-alpha-D-glucosamine + diphosphate. The protein operates within nucleotide-sugar biosynthesis; UDP-N-acetyl-alpha-D-glucosamine biosynthesis; N-acetyl-alpha-D-glucosamine 1-phosphate from alpha-D-glucosamine 6-phosphate (route II): step 2/2. It participates in nucleotide-sugar biosynthesis; UDP-N-acetyl-alpha-D-glucosamine biosynthesis; UDP-N-acetyl-alpha-D-glucosamine from N-acetyl-alpha-D-glucosamine 1-phosphate: step 1/1. It functions in the pathway bacterial outer membrane biogenesis; LPS lipid A biosynthesis. In terms of biological role, catalyzes the last two sequential reactions in the de novo biosynthetic pathway for UDP-N-acetylglucosamine (UDP-GlcNAc). The C-terminal domain catalyzes the transfer of acetyl group from acetyl coenzyme A to glucosamine-1-phosphate (GlcN-1-P) to produce N-acetylglucosamine-1-phosphate (GlcNAc-1-P), which is converted into UDP-GlcNAc by the transfer of uridine 5-monophosphate (from uridine 5-triphosphate), a reaction catalyzed by the N-terminal domain. The chain is Bifunctional protein GlmU from Nitrosococcus oceani (strain ATCC 19707 / BCRC 17464 / JCM 30415 / NCIMB 11848 / C-107).